The sequence spans 348 residues: Probable UDP-arabinopyranose mutase 5 (348 aa).

Positions 100 to 102 (DDD) match the DXD motif motif. Residue arginine 148 is glycosylated (N-linked (Glc...) arginine).

It belongs to the RGP family. As to quaternary structure, heteromers with RGP1 and RGP2. It depends on Mn(2+) as a cofactor. The cofactor is Mg(2+). In terms of processing, reversibly glycosylated in vitro by UDP-glucose, UDP-xylose and UDP-galactose, but not UDP-mannose. As to expression, widely expressed at low levels.

Its subcellular location is the cytoplasm. It is found in the cytosol. The protein localises to the golgi apparatus. It carries out the reaction UDP-beta-L-arabinofuranose = UDP-beta-L-arabinopyranose. Functionally, probable UDP-L-arabinose mutase involved in the biosynthesis of cell wall non-cellulosic polysaccharides. The sequence is that of Probable UDP-arabinopyranose mutase 5 from Arabidopsis thaliana (Mouse-ear cress).